The primary structure comprises 1035 residues: Eukaryotic translation initiation factor 3 subunit A (1035 aa).

Residues 92 to 121 adopt a coiled-coil conformation; it reads LKKFIELAEKKVTEAQAKADEIQSSLESAA. The 185-residue stretch at 339–523 folds into the PCI domain; it reads MTKAASFVLL…GVLTFDTDVF (185 aa). Positions 606–910 form a coiled coil; sequence ERRVIIEKKK…LRAKRAGLSE (305 aa). Basic and acidic residues-rich tracts occupy residues 619–632 and 809–901; these read TDAL…EETR and KAAE…EARL. 2 disordered regions span residues 619–649 and 809–1035; these read TDAL…QRLA and KAAE…QQNQ. Composition is skewed to low complexity over residues 943–953 and 988–1004; these read KEAAGGAAPEA and PPSQ…QTPP.

The protein belongs to the eIF-3 subunit A family. Component of the eukaryotic translation initiation factor 3 (eIF-3) complex.

It is found in the cytoplasm. In terms of biological role, RNA-binding component of the eukaryotic translation initiation factor 3 (eIF-3) complex, which is involved in protein synthesis of a specialized repertoire of mRNAs and, together with other initiation factors, stimulates binding of mRNA and methionyl-tRNAi to the 40S ribosome. The eIF-3 complex specifically targets and initiates translation of a subset of mRNAs involved in cell proliferation. The chain is Eukaryotic translation initiation factor 3 subunit A (tif32) from Emericella nidulans (strain FGSC A4 / ATCC 38163 / CBS 112.46 / NRRL 194 / M139) (Aspergillus nidulans).